The primary structure comprises 117 residues: Inner kinetochore subunit MHF1 (117 aa).

It belongs to the TAF9 family. CENP-S/MHF1 subfamily. The MHF histone-fold complex is a heterotetramer of 2 MHF1-MHF2 heterodimers. Together with MPH1/FANCM, forms the FANCM-MHF complex. Component of the inner kinetochore constitutive centromere-associated network (CCAN).

Functionally, dsDNA-binding component of a FANCM-MHF complex involved in DNA damage repair and genome maintenance. FANCM-MHF promotes gene conversion at blocked replication forks, probably by reversal of the stalled fork. Component of the kinetochore, a multiprotein complex that assembles on centromeric DNA and attaches chromosomes to spindle microtubules, mediating chromosome segregation and sister chromatid segregation during meiosis and mitosis. Component of the inner kinetochore constitutive centromere-associated network (CCAN), which serves as a structural platform for outer kinetochore assembly. This chain is Inner kinetochore subunit MHF1, found in Candida albicans (strain SC5314 / ATCC MYA-2876) (Yeast).